We begin with the raw amino-acid sequence, 780 residues long: MEQVEILRKFIQRVQAMKSPDHNGEDNFARDFMRLRRLSTKYRTEKIYPTATGEKEENVKKNRYKDILPFDHSRVKLTLKTPSQDSDYINANFIKGVYGPKAYVATQGPLANTVIDFWRMIWEYNVVIIVMACREFEMGRKKCERYWPLYGEDPITFAPFKISCEDEQARTDYFIRTLLLEFQNESRRLYQFHYVNWPDHDVPSSFDSILDMISLMRKYQEHEDVPICIHCSAGCGRTGAICAIDYTWNLLKAGKIPEEFNVFNLIQEMRTQRHSAVQTKEQYELVHRAIAQLFEKQLQLYEIHGAQKIADGVNEINTENMVSSIEPEKQDSPPPKPPRTRSCLVEGDAKEEILQPPEPHPVPPILTPSPPSAFPTVTTVWQDNDRYHPKPVLHMVSSEQHSADLNRNYSKSTELPGKNESTIEQIDKKLERNLSFEIKKVPLQEGPKSFDGNTLLNRGHAIKIKSASPCIADKISKPQELSSDLNVGDTSQNSCVDCSVTQSNKVSVTPPEESQNSDTPPRPDRLPLDEKGHVTWSFHGPENAIPIPDLSEGNSSDINYQTRKTVSLTPSPTTQVETPDLVDHDNTSPLFRTPLSFTNPLHSDDSDSDERNSDGAVTQNKTNISTASATVSAATSTESISTRKVLPMSIARHNIAGTTHSGAEKDVDVSEDSPPPLPERTPESFVLASEHNTPVRSEWSELQSQERSEQKKSEGLITSENEKCDHPAGGIHYEMCIECPPTFSDKREQISENPTEATDIGFGNRCGKPKGPRDPPSEWT.

M1 is subject to N-acetylmethionine. A Phosphoserine modification is found at S19. In terms of domain architecture, Tyrosine-protein phosphatase spans 28–293 (FARDFMRLRR…ELVHRAIAQL (266 aa)). Residues R36, 63–67 (RYKDI), D199, 231–237 (CSAGCGR), and Q278 contribute to the substrate site. C231 serves as the catalytic Phosphocysteine intermediate. 4 positions are modified to phosphoserine: S332, S435, S449, and S468. The segment at 345–438 (VEGDAKEEIL…KLERNLSFEI (94 aa)) is interaction with TGFB1I1. The segment covering 502–519 (QSNKVSVTPPEESQNSDT) has biased composition (polar residues). 3 disordered regions span residues 502–639 (QSNK…STES), 657–725 (GTTH…EKCD), and 744–780 (SDKREQISENPTEATDIGFGNRCGKPKGPRDPPSEWT). Phosphothreonine is present on residues T509 and T519. Basic and acidic residues predominate over residues 521 to 533 (PRPDRLPLDEKGH). Composition is skewed to polar residues over residues 552-577 (EGNSSDINYQTRKTVSLTPSPTTQVE) and 587-601 (TSPLFRTPLSFTNPL). S567 is subject to Phosphoserine. T569 is modified (phosphothreonine). Phosphoserine occurs at positions 571 and 596. The residue at position 598 (T598) is a Phosphothreonine. Positions 602–613 (HSDDSDSDERNS) are enriched in basic and acidic residues. Residues S603, S606, S608, and S613 each carry the phosphoserine modification. A compositionally biased stretch (low complexity) spans 622–639 (TNISTASATVSAATSTES). A phosphoserine mark is found at S673 and S689. Residues 690–703 (EHNTPVRSEWSELQ) are compositionally biased toward polar residues. A Phosphothreonine modification is found at T693. Composition is skewed to basic and acidic residues over residues 704–725 (SQERSEQKKSEGLITSENEKCD) and 771–780 (GPRDPPSEWT).

It belongs to the protein-tyrosine phosphatase family. Non-receptor class 4 subfamily. As to quaternary structure, interacts with TGFB1I1. Interacts with PSTPIP1. Interacts with PTK2B/PYK2. Interacts with LPXN. Interacts with SORBS2; this interaction greatly enhances WASF1 dephosphorylation and might mediate partial translocation to focal adhesion sites. In terms of processing, phosphorylated by STK24/MST3 and this results in inhibition of its activity.

It is found in the cytoplasm. It localises to the cell junction. The protein resides in the focal adhesion. The protein localises to the cell projection. Its subcellular location is the podosome. It carries out the reaction O-phospho-L-tyrosyl-[protein] + H2O = L-tyrosyl-[protein] + phosphate. Functionally, dephosphorylates a range of proteins, and thereby regulates cellular signaling cascades. Dephosphorylates cellular tyrosine kinases, such as ERBB2 and PTK2B/PYK2, and thereby regulates signaling via ERBB2 and PTK2B/PYK2. Selectively dephosphorylates ERBB2 phosphorylated at 'Tyr-1112', 'Tyr-1196', and/or 'Tyr-1248'. The chain is Tyrosine-protein phosphatase non-receptor type 12 (PTPN12) from Homo sapiens (Human).